We begin with the raw amino-acid sequence, 142 residues long: Cytochrome b5-related protein (142 aa).

Residues 16 to 100 (PTYRNSAPVT…IAKYKVRDAY (85 aa)) enclose the Cytochrome b5 heme-binding domain. The heme site is built by His59 and His82.

It belongs to the cytochrome b5 family.

May play a role in muscle cell metabolism. This chain is Cytochrome b5-related protein (Cyt-b5-r), found in Drosophila virilis (Fruit fly).